We begin with the raw amino-acid sequence, 407 residues long: [Pyruvate dehydrogenase (acetyl-transferring)] kinase isozyme 2, mitochondrial (407 aa).

The Histidine kinase domain maps to Leu135–Ser364. Residues Tyr215 and Tyr216 each carry the phosphotyrosine modification. ATP-binding positions include Glu251 to Arg258, Asp290, Ser309 to Thr310, and Gly325 to Leu330. Lys376 is subject to N6-succinyllysine.

It belongs to the PDK/BCKDK protein kinase family. Homodimer, and heterodimer with PDK1. Interacts with the pyruvate dehydrogenase complex subunit DLAT, and is part of the multimeric pyruvate dehydrogenase complex that contains multiple copies of pyruvate dehydrogenase (E1), dihydrolipoamide acetyltransferase (DLAT, E2) and lipoamide dehydrogenase (DLD, E3). As to expression, expressed in many tissues, with the highest level in heart and skeletal muscle, intermediate levels in brain, kidney, pancreas and liver, and low levels in placenta and lung.

It localises to the mitochondrion matrix. The enzyme catalyses L-seryl-[pyruvate dehydrogenase E1 alpha subunit] + ATP = O-phospho-L-seryl-[pyruvate dehydrogenase E1 alpha subunit] + ADP + H(+). Activity is enhanced by binding to the pyruvate dehydrogenase subunit DLAT. Inhibited by ADP and pyruvate; these compounds interfere with DLAT binding and thereby inhibit kinase activity. Inhibited by dichloroacetate. Inhibited by AZD7545; this compound interferes with DLAT binding and thereby inhibits kinase activity. Its function is as follows. Kinase that plays a key role in the regulation of glucose and fatty acid metabolism and homeostasis via phosphorylation of the pyruvate dehydrogenase subunits PDHA1 and PDHA2. This inhibits pyruvate dehydrogenase activity, and thereby regulates metabolite flux through the tricarboxylic acid cycle, down-regulates aerobic respiration and inhibits the formation of acetyl-coenzyme A from pyruvate. Inhibition of pyruvate dehydrogenase decreases glucose utilization and increases fat metabolism. Mediates cellular responses to insulin. Plays an important role in maintaining normal blood glucose levels and in metabolic adaptation to nutrient availability. Via its regulation of pyruvate dehydrogenase activity, plays an important role in maintaining normal blood pH and in preventing the accumulation of ketone bodies under starvation. Plays a role in the regulation of cell proliferation and in resistance to apoptosis under oxidative stress. Plays a role in p53/TP53-mediated apoptosis. This Homo sapiens (Human) protein is [Pyruvate dehydrogenase (acetyl-transferring)] kinase isozyme 2, mitochondrial (PDK2).